The following is a 265-amino-acid chain: Taurine import ATP-binding protein TauB (265 aa).

The region spanning 7 to 236 (QNLNMIFKTP…MGIDGDLREI (230 aa)) is the ABC transporter domain. 41-48 (GPSGCGKT) contacts ATP.

The protein belongs to the ABC transporter superfamily. Taurine importer (TC 3.A.1.17.1) family. The complex is composed of two ATP-binding proteins (TauB), two transmembrane proteins (TauC) and a solute-binding protein (TauA).

It is found in the cell inner membrane. It carries out the reaction taurine(out) + ATP + H2O = taurine(in) + ADP + phosphate + H(+). Functionally, part of the ABC transporter complex TauABC involved in taurine import. Responsible for energy coupling to the transport system. The protein is Taurine import ATP-binding protein TauB of Pelagibacter ubique (strain HTCC1062).